The sequence spans 582 residues: MKMHFFILLVITSWLSEKITSLPPDSRVFDRHGFPDNFVFGTAASAFQYEGATSEGGKSPSIWDYFSHTFPERTRMQNADVAVDFYHRYKDDIKLMKELNMDAFRFSISWARLIPSGKVKDGVNKEGVEFYKALIDELVANGIEPSMTLYHWDHPQSLEDEYGGFLSPQIVEDFRDFSRVCFEEFGDKVKMWTTINEPYVITVAGYDTGNKAVGRCSKWVNSKCQGGDSGTEPYIASHHLLLAHAAAVQEFRKCNKTQDGQIGIVLSPLWFEPYDSASPADNEAVKRALATELDWHLDPVIHGDYPEMMKKLAGNRLPSFTPEQSKMLKNSSDFIGINYYTARYVAHIPQADPARPRFVTDHQLQWRVTNHSNHQFGPGEDRGILQSHPEGLRKVLNYIKDKYNNPIVYIKENGINDYDDGTKSREEILNDTFRISYHEDHLQQLQKAIIEDGCDVRGYYVWSLLDNFEWEHGYSTRFGVYYVDYDNDLTRIPKDSVNWFKQFLDVKNKEIWDVSHKERYNKTFDDVESFEASVGSILYLMTNNISRREEEERDQCAFGNLNDQSGLLLESYNSFGFLENVW.

Residues 1–21 form the signal peptide; the sequence is MKMHFFILLVITSWLSEKITS. A beta-D-glucoside contacts are provided by residues glutamine 48, histidine 151, and 196–197; that span reads NE. The active-site Proton donor is the glutamate 197. Cysteine 216 and cysteine 224 are joined by a disulfide. N-linked (GlcNAc...) asparagine glycans are attached at residues asparagine 255 and asparagine 330. Tyrosine 340 is an a beta-D-glucoside binding site. The N-linked (GlcNAc...) asparagine glycan is linked to asparagine 370. Glutamate 412 contributes to the a beta-D-glucoside binding site. Glutamate 412 functions as the Nucleophile in the catalytic mechanism. Asparagine 430 carries an N-linked (GlcNAc...) asparagine glycan. A beta-D-glucoside contacts are provided by residues tryptophan 462, 469–470, and phenylalanine 478; that span reads EW. Residues asparagine 521 and asparagine 544 are each glycosylated (N-linked (GlcNAc...) asparagine).

This sequence belongs to the glycosyl hydrolase 1 family.

It carries out the reaction Hydrolysis of terminal, non-reducing beta-D-glucosyl residues with release of beta-D-glucose.. In Arabidopsis thaliana (Mouse-ear cress), this protein is Beta-glucosidase 28.